A 124-amino-acid chain; its full sequence is NADH dehydrogenase [ubiquinone] 1 alpha subcomplex subunit 6 (124 aa).

This sequence belongs to the complex I LYR family.

The protein resides in the mitochondrion inner membrane. In terms of biological role, accessory subunit of the mitochondrial membrane respiratory chain NADH dehydrogenase (Complex I), that is believed to be not involved in catalysis. Complex I functions in the transfer of electrons from NADH to the respiratory chain. The immediate electron acceptor for the enzyme is believed to be ubiquinone. The polypeptide is NADH dehydrogenase [ubiquinone] 1 alpha subcomplex subunit 6 (ndufa6) (Dictyostelium discoideum (Social amoeba)).